Reading from the N-terminus, the 175-residue chain is Ribosome maturation factor RimM (175 aa).

Positions 93-167 (DDEFYYSDLI…YIIITLPEVI (75 aa)) constitute a PRC barrel domain.

The protein belongs to the RimM family. Binds ribosomal protein uS19.

The protein localises to the cytoplasm. Its function is as follows. An accessory protein needed during the final step in the assembly of 30S ribosomal subunit, possibly for assembly of the head region. Essential for efficient processing of 16S rRNA. May be needed both before and after RbfA during the maturation of 16S rRNA. It has affinity for free ribosomal 30S subunits but not for 70S ribosomes. In Ehrlichia chaffeensis (strain ATCC CRL-10679 / Arkansas), this protein is Ribosome maturation factor RimM.